Here is a 157-residue protein sequence, read N- to C-terminus: 3-hydroxyacyl-[acyl-carrier-protein] dehydratase FabZ (157 aa).

Histidine 58 is an active-site residue.

Belongs to the thioester dehydratase family. FabZ subfamily.

Its subcellular location is the cytoplasm. It carries out the reaction a (3R)-hydroxyacyl-[ACP] = a (2E)-enoyl-[ACP] + H2O. In terms of biological role, involved in unsaturated fatty acids biosynthesis. Catalyzes the dehydration of short chain beta-hydroxyacyl-ACPs and long chain saturated and unsaturated beta-hydroxyacyl-ACPs. The polypeptide is 3-hydroxyacyl-[acyl-carrier-protein] dehydratase FabZ (Brucella ovis (strain ATCC 25840 / 63/290 / NCTC 10512)).